Consider the following 408-residue polypeptide: Methyltransferase/ribosomally synthesized type I borosin cyclic peptide precursor sveMA (408 aa).

The interval 1–250 (MASSTHPKRG…TSSTFYIPPR (250 aa)) is methyltransferase domain. Residues Arg-73, Tyr-77, and Tyr-99 contribute to the active site. 8 residues coordinate S-adenosyl-L-methionine: Tyr-99, His-101, Ile-104, Ala-131, Gln-173, Gly-211, Ser-242, and Thr-244. The clasp domain stretch occupies residues 251–375 (DSEAIDYDMV…GSVYKVMSAT (125 aa)). The tract at residues 371–385 (VMSATQADIELGKEP) is precursor leader. Val-401 carries the post-translational modification N-methylvaline. Ile-402 carries the N-methylisoleucine modification. Val-406 is modified (N-methylvaline).

The protein in the N-terminal section; belongs to the precorrin methyltransferase family. Homodimer. Post-translationally, sveMA automethylates at Val-401, Ile-402 and Val-406 before being processed by a prolyloligopeptidase which likely forms a peptidyl ester upon removal of the follower propeptide, which then undergoes macrocyclization with the N-terminus of the modified core peptide. Peptide backbone alpha-N-methylations change the physicochemical properties of amide bonds to provide structural constraints and other favorable characteristics including biological membrane permeability to peptides.

Its pathway is secondary metabolite biosynthesis. In terms of biological role, fusion protein of the methyltransferase sveM and a type I borosin core peptide; part of the gene cluster that mediates the biosynthesis of a type I borosin, a highly methylated cyclic peptide with potent biological activities. Type I borosins derive from the C-terminus of the fusion protein, and it is the same protein that methylates its own C-terminus using S-adenosyl methionine (SAM). The C-terminus is subsequently cleaved off and macrocyclized by a prolyloligopeptidase to give the final product. The sequence is that of Methyltransferase/ribosomally synthesized type I borosin cyclic peptide precursor sveMA from Serendipita vermifera subsp. bescii (Mycorrhizal fungus).